The sequence spans 271 residues: Phospholipid scramblase family member 5 (271 aa).

Polar residues predominate over residues 1–10 (MASKDAQNQR). The tract at residues 1 to 33 (MASKDAQNQRRGLPGFLPGAPDPDQSLPASSNP) is disordered. The tract at residues 1 to 45 (MASKDAQNQRRGLPGFLPGAPDPDQSLPASSNPGNQAWQLSLPLP) is proline-rich domain (PRD).

It belongs to the phospholipid scramblase family.

The polypeptide is Phospholipid scramblase family member 5 (PLSCR5) (Homo sapiens (Human)).